Consider the following 473-residue polypeptide: Exodeoxyribonuclease I (473 aa).

Residues 9–188 form the Exonuclease domain; the sequence is IYDYESFGVN…AMADVYATIA (180 aa). The Mg(2+) site is built by Asp11, Glu13, and Asp182. Glu13 lines the substrate pocket. The 156-residue stretch at 198-353 folds into the ExoI SH3-like domain; the sequence is PKLFQYFFEN…KVADIFNEER (156 aa). An ExoI C-terminal domain is found at 356 to 472; it reads ASNDNVETEL…QVYEYGIKLL (117 aa).

As to quaternary structure, monomer. Interacts with ssb (via C-terminus); this interaction stimulates the exonuclease activity by recruiting the enzyme to its substrate. The cofactor is Mg(2+).

The enzyme catalyses Exonucleolytic cleavage in the 3'- to 5'-direction to yield nucleoside 5'-phosphates.. In terms of biological role, degrades single-stranded DNA (ssDNA) in a highly processive manner. Also functions as a DNA deoxyribophosphodiesterase that releases deoxyribose-phosphate moieties following the cleavage of DNA at an apurinic/apyrimidinic (AP) site by either an AP endonuclease or AP lyase. Involved in genome maintenance but probably not in phase variation, which contributes to the virulence and disease. The chain is Exodeoxyribonuclease I (sbcB) from Haemophilus influenzae (strain ATCC 51907 / DSM 11121 / KW20 / Rd).